The primary structure comprises 1154 residues: ATP-dependent helicase/deoxyribonuclease subunit B (1154 aa).

Positions Met1–Lys284 constitute a UvrD-like helicase ATP-binding domain. Residue Gly8–Thr15 coordinates ATP. A UvrD-like helicase C-terminal domain is found at His279–Asp583. Cys799, Cys1120, Cys1123, and Cys1129 together coordinate [4Fe-4S] cluster.

It belongs to the helicase family. AddB/RexB type 1 subfamily. As to quaternary structure, heterodimer of AddA and AddB. Mg(2+) serves as cofactor. Requires [4Fe-4S] cluster as cofactor.

In terms of biological role, the heterodimer acts as both an ATP-dependent DNA helicase and an ATP-dependent, dual-direction single-stranded exonuclease. Recognizes the chi site generating a DNA molecule suitable for the initiation of homologous recombination. The AddB subunit has 5' -&gt; 3' nuclease activity but not helicase activity. The sequence is that of ATP-dependent helicase/deoxyribonuclease subunit B from Anoxybacillus flavithermus (strain DSM 21510 / WK1).